Reading from the N-terminus, the 193-residue chain is Gas vesicle protein C (193 aa).

5 consecutive repeats follow at residues 19–51, 52–84, 85–117, 118–150, and 151–183; these read VAELSLETREFLSVTTAKRQEQAEKQAQELQAF, YKDLQETSQQFLSETAQARIAQAEKQAQELLAF, HKELQETSQQFLSATAQARIAQAEKQAQELLAF, YQEVRETSQQFLSATAQARIAQAEKQAQELLAF, and HKELQETSQQFLSATADARTAQAKEQKESLLKF. The segment at 19-183 is 5 X 33 AA tandem repeats; sequence VAELSLETRE…KEQKESLLKF (165 aa).

This sequence belongs to the gas vesicle GvpC family.

It localises to the gas vesicle. Functionally, confers stability, involved in shaping gas vesicles (GV), hollow, gas-filled proteinaceous nanostructures. During planktonic growth they allow positioning of the organism at a favorable depth for light or nutrient acquisition. The ratio of GvpA:GvpC is estimated to be 25:1. GvpC strengthens the GV wall, probably by connecting several GvpA proteins in the same and/or adjacent ribs. Removal of GvpC by SDS reduces the critical collapse pressure (CCP) of stored gas vesicles from 0.23 Mpa to 0.08 MPa. Removal of GvpC by urea reduces CCP of freshly isolated GVs from 0.550 MPa to 0.190 MPa; addition of recombinant GvpC restores CCP to 0.508 MPa. As the turgor pressure in this species is usually 0.35 MPa (plus the water column pressure in its growth environment), this protein is essential for GV formation. In Dolichospermum flosaquae (Anabaena flos-aquae), this protein is Gas vesicle protein C.